The following is a 432-amino-acid chain: Adenylosuccinate synthetase (432 aa).

Residues 13 to 19 (GDEGKGK) and 41 to 43 (GHT) contribute to the GTP site. Asp-14 acts as the Proton acceptor in catalysis. Mg(2+) is bound by residues Asp-14 and Gly-41. IMP contacts are provided by residues 14–17 (DEGK), 39–42 (NAGH), Thr-130, Arg-144, Gln-225, Thr-240, and Arg-304. His-42 serves as the catalytic Proton donor. 300–306 (ATTGRKR) contacts substrate. GTP-binding positions include Arg-306, 332-334 (KLD), and 415-417 (STG).

This sequence belongs to the adenylosuccinate synthetase family. In terms of assembly, homodimer. The cofactor is Mg(2+).

The protein resides in the cytoplasm. The catalysed reaction is IMP + L-aspartate + GTP = N(6)-(1,2-dicarboxyethyl)-AMP + GDP + phosphate + 2 H(+). Its pathway is purine metabolism; AMP biosynthesis via de novo pathway; AMP from IMP: step 1/2. In terms of biological role, plays an important role in the de novo pathway of purine nucleotide biosynthesis. Catalyzes the first committed step in the biosynthesis of AMP from IMP. The sequence is that of Adenylosuccinate synthetase from Photobacterium profundum (strain SS9).